Consider the following 246-residue polypeptide: Probable transcriptional regulatory protein KPK_1906 (246 aa).

The protein belongs to the TACO1 family.

The protein localises to the cytoplasm. This chain is Probable transcriptional regulatory protein KPK_1906, found in Klebsiella pneumoniae (strain 342).